The sequence spans 201 residues: NADH-quinone oxidoreductase subunit C (201 aa).

Belongs to the complex I 30 kDa subunit family. In terms of assembly, NDH-1 is composed of 14 different subunits. Subunits NuoB, C, D, E, F, and G constitute the peripheral sector of the complex.

The protein resides in the cell inner membrane. The enzyme catalyses a quinone + NADH + 5 H(+)(in) = a quinol + NAD(+) + 4 H(+)(out). Functionally, NDH-1 shuttles electrons from NADH, via FMN and iron-sulfur (Fe-S) centers, to quinones in the respiratory chain. The immediate electron acceptor for the enzyme in this species is believed to be ubiquinone. Couples the redox reaction to proton translocation (for every two electrons transferred, four hydrogen ions are translocated across the cytoplasmic membrane), and thus conserves the redox energy in a proton gradient. The protein is NADH-quinone oxidoreductase subunit C of Mesorhizobium japonicum (strain LMG 29417 / CECT 9101 / MAFF 303099) (Mesorhizobium loti (strain MAFF 303099)).